Here is a 404-residue protein sequence, read N- to C-terminus: Probable tRNA sulfurtransferase (404 aa).

The region spanning Gln60–Glu165 is the THUMP domain. Residues Met183–Leu184, His208–Phe209, Arg265, Gly287, and Gln296 each bind ATP.

This sequence belongs to the ThiI family.

It localises to the cytoplasm. It carries out the reaction [ThiI sulfur-carrier protein]-S-sulfanyl-L-cysteine + a uridine in tRNA + 2 reduced [2Fe-2S]-[ferredoxin] + ATP + H(+) = [ThiI sulfur-carrier protein]-L-cysteine + a 4-thiouridine in tRNA + 2 oxidized [2Fe-2S]-[ferredoxin] + AMP + diphosphate. The catalysed reaction is [ThiS sulfur-carrier protein]-C-terminal Gly-Gly-AMP + S-sulfanyl-L-cysteinyl-[cysteine desulfurase] + AH2 = [ThiS sulfur-carrier protein]-C-terminal-Gly-aminoethanethioate + L-cysteinyl-[cysteine desulfurase] + A + AMP + 2 H(+). The protein operates within cofactor biosynthesis; thiamine diphosphate biosynthesis. Functionally, catalyzes the ATP-dependent transfer of a sulfur to tRNA to produce 4-thiouridine in position 8 of tRNAs, which functions as a near-UV photosensor. Also catalyzes the transfer of sulfur to the sulfur carrier protein ThiS, forming ThiS-thiocarboxylate. This is a step in the synthesis of thiazole, in the thiamine biosynthesis pathway. The sulfur is donated as persulfide by IscS. In Streptococcus pyogenes serotype M1, this protein is Probable tRNA sulfurtransferase.